The primary structure comprises 590 residues: Regulatory solute carrier protein family 1 member 1 (590 aa).

Disordered stretches follow at residues 1-116, 144-234, 277-331, and 359-466; these read MSSS…TQGL, EEGW…PDSE, SPSS…AEES, and EEVT…SHRT. Residues 16–35 are compositionally biased toward polar residues; that stretch reads SSGQSPEAGNPTSLARSVSA. Positions 78 to 91 are enriched in low complexity; the sequence is SPCAAAAAPSSAMP. The segment covering 150–161 has biased composition (polar residues); sequence ENQNPSQVNDLQ. Basic and acidic residues-rich tracts occupy residues 162-179 and 188-203; these read QHQE…RDAP and PGER…REAT. Positions 313 to 331 are enriched in low complexity; the sequence is SSSSVCGSSQPPAESAEES. The segment covering 362-376 has biased composition (polar residues); the sequence is TCQSEGTAWGQTRVN. Basic and acidic residues-rich tracts occupy residues 380–395 and 404–420; these read RWTE…DRPQ and VKTE…RIED. Residues 451–465 are compositionally biased toward polar residues; the sequence is SVTVTSAETSNQSHR. Residues 544–584 enclose the UBA domain; the sequence is GFPAADIDRILRAGFTLQEALGALHRVGGNADLALLVLLAK.

As to quaternary structure, interacts with YRDC. Highly expressed in renal outer medulla, renal inner medulla, duodenum, ileum and jejunum. Moderately expressed in renal outer cortex, renal papilla, brain and liver.

Its subcellular location is the cell membrane. It is found in the nucleus. The protein localises to the golgi apparatus. The protein resides in the trans-Golgi network. Mediates transcriptional and post-transcriptional regulation of SLC5A1. Inhibits a dynamin and PKC-dependent exocytotic pathway of SLC5A1. Also involved in transcriptional regulation of SLC22A2. Exhibits glucose-dependent, short-term inhibition of SLC5A1 and SLC22A2 by inhibiting the release of vesicles from the trans-Golgi network. This Oryctolagus cuniculus (Rabbit) protein is Regulatory solute carrier protein family 1 member 1 (RSC1A1).